Consider the following 398-residue polypeptide: MAGFKTLDDLKDVAGKRVLLRVDLNVPVKDGEVTDTTRIERVAPTITELSDKGAKVILLAHFGRPKGKPDAEASLQPIAHAVEAVLDRRVHFASSCIGEPAKKAVDEMTGGDILLLENTRFHAGEEKNDPEFTKALAANGDIYVNDAFSAAHRAHASTEGLAHLLPAYAGRTIQAELEALQRGLGDPKRPVVAIVGGAKVSTKIDLLTNLVKKVDCLVIGGGMANTFLAARGTSVGKSLCEHDLRETAKQIMIDAAEAGCAIILPVDAVVARKFEAGAETETVDIDAVPEDAMILDVGPKSVEKVKEWLDRADTLVWNGPLGAFELSPFDKATMEVAKYAARRTRESLLVSVAGGGDTVAALNQADVSDDFSYVSTAGGAFLEWMEGKDLPGVAALQK.

Residues 23–25, arginine 38, 61–64, arginine 120, and arginine 153 contribute to the substrate site; these read DLN and HFGR. ATP-binding positions include lysine 203, glutamate 325, and 355 to 358; that span reads GGDT.

Belongs to the phosphoglycerate kinase family. Monomer.

Its subcellular location is the cytoplasm. It catalyses the reaction (2R)-3-phosphoglycerate + ATP = (2R)-3-phospho-glyceroyl phosphate + ADP. It functions in the pathway carbohydrate degradation; glycolysis; pyruvate from D-glyceraldehyde 3-phosphate: step 2/5. The protein is Phosphoglycerate kinase of Chelativorans sp. (strain BNC1).